The sequence spans 719 residues: Acyl-coenzyme A oxidase (719 aa).

The short motif at 716 to 719 (APKI) is the Microbody targeting signal element.

It belongs to the acyl-CoA oxidase family. FAD serves as cofactor.

The protein resides in the peroxisome. The enzyme catalyses a 2,3-saturated acyl-CoA + O2 = a (2E)-enoyl-CoA + H2O2. Its pathway is lipid metabolism; peroxisomal fatty acid beta-oxidation. The sequence is that of Acyl-coenzyme A oxidase (POX1) from Komagataella pastoris (Yeast).